We begin with the raw amino-acid sequence, 102 residues long: MAKQKIRIRLKAYDHRVIDQSAEKIVETAKRSGADVSGPIPLPTEKSVYTIIRAVHKYKDSREQFEQRTHKRLIDIVNPTPKTVDALMGLNLPSGVDIEIKL.

It belongs to the universal ribosomal protein uS10 family. As to quaternary structure, part of the 30S ribosomal subunit.

Involved in the binding of tRNA to the ribosomes. The protein is Small ribosomal subunit protein uS10 of Staphylococcus aureus (strain JH9).